Here is a 367-residue protein sequence, read N- to C-terminus: MKKQRIVVKIGSSSLADSHEGISKEQLSDHVAALARLKEEGHEVLLITSGAVAAGFSALGYPSRPVTIKGKQAAAAVGQSLLMQAYTEEFRKYGIVTAQLLLTRSDFSRKEQYSNAYATLGELLNRSALPIINENDSISLEELTFGDNDMLSALVSGLVSADMLMIFTDVNGLYDKNPQKNEDAKKYYFLPEVTEEIASLAGDAGSKLGTGGMKSKVDAAKTALSLGVSVFIGTGRGQEKFVDVLKGKGDGTYVGNAPQKEMKINKQWIALHSVVSGQIEIDAGAATAIIQHGKSLLPAGVTNVSGFFQVGEVVEVMTQQGRVIGKGQCTYSAEELRDVKGMQSQQIQARGERHNYEVIHRDYWVSF.

K9 is an ATP binding site. Substrate is bound by residues S49, D136, and N148. Residues 168 to 169 (TD) and 210 to 216 (TGGMKSK) contribute to the ATP site. Positions 276–350 (SGQIEIDAGA…GMQSQQIQAR (75 aa)) constitute a PUA domain.

This sequence belongs to the glutamate 5-kinase family.

The protein localises to the cytoplasm. It catalyses the reaction L-glutamate + ATP = L-glutamyl 5-phosphate + ADP. It participates in amino-acid biosynthesis; L-proline biosynthesis; L-glutamate 5-semialdehyde from L-glutamate: step 1/2. In terms of biological role, catalyzes the transfer of a phosphate group to glutamate to form L-glutamate 5-phosphate. The protein is Glutamate 5-kinase of Bacillus anthracis.